We begin with the raw amino-acid sequence, 500 residues long: tRNA nucleotidyltransferase cca1 (500 aa).

Residues 122-139 (DYTNSNSSNKLVFGTPLE) form a flexible loop region. The short motif at 231 to 241 (ERIGVEVDKML) is the ERhxxExxxhh motif element.

It belongs to the tRNA nucleotidyltransferase/poly(A) polymerase family.

It carries out the reaction a tRNA precursor + 2 CTP = a tRNA with a 3' CC end + 2 diphosphate. Its function is as follows. tRNA nucleotidyltransferase involved in the synthesis of the tRNA CCA terminus. In contrast to what is usually observed in eukaryotes for which one enzyme synthesizes the whole tRNA CCA terminus, in S.pombe, cca1 specifically adds two cytidine residues to a tRNA substrate lacking this sequence while cca2 specifically adds the terminal adenosine residue thereby completing the CCA sequence. The sequence is that of tRNA nucleotidyltransferase cca1 from Schizosaccharomyces pombe (strain 972 / ATCC 24843) (Fission yeast).